The primary structure comprises 178 residues: Small ribosomal subunit protein uS5 (178 aa).

The S5 DRBM domain maps to 17 to 80 (FEERIVEIRR…AAARASVVEI (64 aa)).

It belongs to the universal ribosomal protein uS5 family. Part of the 30S ribosomal subunit. Contacts proteins S4 and S8.

In terms of biological role, with S4 and S12 plays an important role in translational accuracy. Its function is as follows. Located at the back of the 30S subunit body where it stabilizes the conformation of the head with respect to the body. In Pseudothermotoga lettingae (strain ATCC BAA-301 / DSM 14385 / NBRC 107922 / TMO) (Thermotoga lettingae), this protein is Small ribosomal subunit protein uS5.